We begin with the raw amino-acid sequence, 158 residues long: MAIEGVLQEGFVTTTADKLINYMRTGSLWPMTFGLACCAVEMIHAGVSRYDLDRFGVVFRPSPRQSDVMIVAGTLTNKMAPALRKVYDQMAEPRWVISMGSCANGGGYYHYSYSVVRGCDRIVPVDIYVPGCPPTAEALIYGIIQLQNKIRRTNTIAR.

[4Fe-4S] cluster-binding residues include Cys-37, Cys-38, Cys-102, and Cys-132.

It belongs to the complex I 20 kDa subunit family. In terms of assembly, NDH-1 is composed of 14 different subunits. Subunits NuoB, C, D, E, F, and G constitute the peripheral sector of the complex. It depends on [4Fe-4S] cluster as a cofactor.

The protein resides in the cell inner membrane. The catalysed reaction is a quinone + NADH + 5 H(+)(in) = a quinol + NAD(+) + 4 H(+)(out). NDH-1 shuttles electrons from NADH, via FMN and iron-sulfur (Fe-S) centers, to quinones in the respiratory chain. Couples the redox reaction to proton translocation (for every two electrons transferred, four hydrogen ions are translocated across the cytoplasmic membrane), and thus conserves the redox energy in a proton gradient. The protein is NADH-quinone oxidoreductase subunit B of Dechloromonas aromatica (strain RCB).